A 276-amino-acid polypeptide reads, in one-letter code: Alpha N-terminal protein methyltransferase 1 (276 aa).

Residues Gly-96, Arg-101, Glu-118–Val-120, Leu-149–Gln-150, and Gln-165 contribute to the S-adenosyl-L-methionine site.

Belongs to the methyltransferase superfamily. NTM1 family.

It carries out the reaction N-terminal L-alanyl-L-prolyl-L-lysyl-[protein] + 3 S-adenosyl-L-methionine = N-terminal N,N,N-trimethyl-L-alanyl-L-prolyl-L-lysyl-[protein] + 3 S-adenosyl-L-homocysteine + 3 H(+). It catalyses the reaction N-terminal L-seryl-L-prolyl-L-lysyl-[protein] + 3 S-adenosyl-L-methionine = N-terminal N,N,N-trimethyl-L-seryl-L-prolyl-L-lysyl-[protein] + 3 S-adenosyl-L-homocysteine + 3 H(+). The catalysed reaction is N-terminal L-prolyl-L-prolyl-L-lysyl-[protein] + 2 S-adenosyl-L-methionine = N-terminal N,N-dimethyl-L-prolyl-L-prolyl-L-lysyl-[protein] + 2 S-adenosyl-L-homocysteine + 2 H(+). In terms of biological role, alpha-N-methyltransferase that methylates the N-terminus of target proteins containing the N-terminal motif [Ala/Pro/Ser]-Pro-Lys when the initiator Met is cleaved. Specifically catalyzes mono-, di- or tri-methylation of exposed alpha-amino group of Ala or Ser residue in the [Ala/Ser]-Pro-Lys motif and mono- or di-methylation of Pro in the Pro-Pro-Lys motif. This chain is Alpha N-terminal protein methyltransferase 1, found in Arabidopsis thaliana (Mouse-ear cress).